Here is a 356-residue protein sequence, read N- to C-terminus: Protein-glutamate methylesterase/protein-glutamine glutaminase 3 (356 aa).

The Response regulatory domain occupies 3 to 120; it reads KVAIVDDSAV…KGFLEESQAR (118 aa). Residue aspartate 54 is modified to 4-aspartylphosphate. The region spanning 165–356 is the CheB-type methylesterase domain; it reads NQTTDRVVAL…AEEIIAFTKQ (192 aa). Catalysis depends on residues serine 177, histidine 203, and aspartate 299.

It belongs to the CheB family. Post-translationally, phosphorylated by CheA. Phosphorylation of the N-terminal regulatory domain activates the methylesterase activity.

Its subcellular location is the cytoplasm. It catalyses the reaction [protein]-L-glutamate 5-O-methyl ester + H2O = L-glutamyl-[protein] + methanol + H(+). It carries out the reaction L-glutaminyl-[protein] + H2O = L-glutamyl-[protein] + NH4(+). Its function is as follows. Involved in chemotaxis. Part of a chemotaxis signal transduction system that modulates chemotaxis in response to various stimuli. Catalyzes the demethylation of specific methylglutamate residues introduced into the chemoreceptors (methyl-accepting chemotaxis proteins or MCP) by CheR. Also mediates the irreversible deamidation of specific glutamine residues to glutamic acid. This is Protein-glutamate methylesterase/protein-glutamine glutaminase 3 from Shewanella oneidensis (strain ATCC 700550 / JCM 31522 / CIP 106686 / LMG 19005 / NCIMB 14063 / MR-1).